Reading from the N-terminus, the 252-residue chain is uncharacterized protein (252 aa).

The ABC transporter domain maps to 13-247 (ITLENVNKWY…PKSERTRAFL (235 aa)). Position 45–52 (45–52 (GPSGSGKS)) interacts with ATP.

It belongs to the ABC transporter superfamily.

The protein localises to the cell inner membrane. Functionally, probably part of a binding-protein-dependent transport system YdhWXYZ for an amino acid. Probably responsible for energy coupling to the transport system. This is an uncharacterized protein from Escherichia coli (strain K12).